A 195-amino-acid polypeptide reads, in one-letter code: Imidazoleglycerol-phosphate dehydratase (195 aa).

This sequence belongs to the imidazoleglycerol-phosphate dehydratase family.

It is found in the cytoplasm. It carries out the reaction D-erythro-1-(imidazol-4-yl)glycerol 3-phosphate = 3-(imidazol-4-yl)-2-oxopropyl phosphate + H2O. The protein operates within amino-acid biosynthesis; L-histidine biosynthesis; L-histidine from 5-phospho-alpha-D-ribose 1-diphosphate: step 6/9. The sequence is that of Imidazoleglycerol-phosphate dehydratase from Geobacter metallireducens (strain ATCC 53774 / DSM 7210 / GS-15).